The following is a 360-amino-acid chain: Probable mannan endo-1,4-beta-mannosidase A (360 aa).

The signal sequence occupies residues 1–18 (MKLSQILTFASLLSGALA). 2 residues coordinate substrate: asparagine 142 and asparagine 178. The active-site Proton donor is the glutamate 179. Tyrosine 254 lines the substrate pocket. Catalysis depends on glutamate 287, which acts as the Nucleophile. N-linked (GlcNAc...) asparagine glycosylation is present at asparagine 307. Position 317 (tryptophan 317) interacts with substrate.

Belongs to the glycosyl hydrolase 5 (cellulase A) family.

It is found in the secreted. It catalyses the reaction Random hydrolysis of (1-&gt;4)-beta-D-mannosidic linkages in mannans, galactomannans and glucomannans.. Endo-1,4-mannanase, a crucial enzyme for depolymerization of seed galactomannans and wood galactoglucomannans. This chain is Probable mannan endo-1,4-beta-mannosidase A (manA), found in Aspergillus clavatus (strain ATCC 1007 / CBS 513.65 / DSM 816 / NCTC 3887 / NRRL 1 / QM 1276 / 107).